Here is a 134-residue protein sequence, read N- to C-terminus: Interleukin-4 (134 aa).

A signal peptide spans 1–23 (MGLTYQLLPALVCLLACTSFIQG). Cystine bridges form between C24–C133 and C48–C88. A glycan (N-linked (GlcNAc...) asparagine) is linked at N38. N101 carries N-linked (GlcNAc...) asparagine glycosylation.

The protein belongs to the IL-4/IL-13 family.

Its subcellular location is the secreted. Functionally, participates in at least several B-cell activation processes as well as of other cell types. It is a costimulator of DNA-synthesis. It induces the expression of class II MHC molecules on resting B-cells. It enhances both secretion and cell surface expression of IgE and IgG1. It also regulates the expression of the low affinity Fc receptor for IgE (CD23) on both lymphocytes and monocytes. Positively regulates IL31RA expression in macrophages. Stimulates autophagy in dendritic cells by interfering with mTORC1 signaling and through the induction of RUFY4. The chain is Interleukin-4 (IL4) from Equus caballus (Horse).